We begin with the raw amino-acid sequence, 251 residues long: Diphthine synthase (251 aa).

S-adenosyl-L-methionine contacts are provided by residues Leu9, Asp84, Val87, Ser112–Ile113, Leu160, Ala194, and His219.

The protein belongs to the diphthine synthase family. Homodimer.

The enzyme catalyses 2-[(3S)-amino-3-carboxypropyl]-L-histidyl-[translation elongation factor 2] + 3 S-adenosyl-L-methionine = diphthine-[translation elongation factor 2] + 3 S-adenosyl-L-homocysteine + 3 H(+). It functions in the pathway protein modification; peptidyl-diphthamide biosynthesis. In terms of biological role, S-adenosyl-L-methionine-dependent methyltransferase that catalyzes the trimethylation of the amino group of the modified target histidine residue in translation elongation factor 2 (EF-2), to form an intermediate called diphthine. The three successive methylation reactions represent the second step of diphthamide biosynthesis. The sequence is that of Diphthine synthase from Archaeoglobus fulgidus (strain ATCC 49558 / DSM 4304 / JCM 9628 / NBRC 100126 / VC-16).